The chain runs to 981 residues: NAD(+) hydrolase tir-1 (981 aa).

3 disordered regions span residues 1 to 31 (MLPN…RSLK), 74 to 128 (QNEQ…PTQP), and 173 to 225 (LSTP…PVDQ). 2 stretches are compositionally biased toward polar residues: residues 12 to 23 (PSFQSLNNNNQR) and 74 to 85 (QNEQDGETTSTD). The segment covering 87–97 (AFFELDDDDDL) has biased composition (acidic residues). The span at 98-114 (SSPSVPGSPVDPPSISV) shows a compositional bias: low complexity. The span at 115 to 128 (PLPPKSAPPCPTQP) shows a compositional bias: pro residues. Positions 182–200 (EEMHNGQVRKESEYRRFKS) are enriched in basic and acidic residues. 2 consecutive SAM domains span residues 614–678 (WTCA…LKVA) and 684–750 (VDES…AKHP). In terms of domain architecture, TIR spans 760-857 (KQIDVFISYR…EHQKNIIPIF (98 aa)). Position 769–770 (769–770 (RR)) interacts with NAD(+). Glutamate 842 is a catalytic residue. Composition is skewed to polar residues over residues 908-939 (TTPT…TGPS), 954-963 (FTPTGSQERA), and 972-981 (PSASTTSDRN). Positions 908 to 981 (TTPTTKEMPS…PSASTTSDRN (74 aa)) are disordered.

This sequence belongs to the SARM1 family. Homodimer. Interacts with rab-1, pal-1 and unc-43. In terms of tissue distribution, highly expressed in hypodermis. Localizes to postsynaptic regions of axons.

It is found in the cytoplasm. It carries out the reaction NAD(+) + H2O = ADP-D-ribose + nicotinamide + H(+). NAD(+) hydrolase, which plays a key role in non-apoptotic cell death by regulating NAD(+) metabolism. In response to stress, homooligomerizes and catalyzes cleavage of NAD(+) into ADP-D-ribose (ADPR) and nicotinamide; NAD(+) cleavage promoting non-apoptotic neuronal cell death. In males, involved in non-apoptotic death of the linker cell which guides gonad elongation during larval development. Required for both innate immune response and specification of AWC(OFF) neuron. During late embryogenesis, it acts downstream of CAMKII (unc-43) to regulate specification of asymmetric odorant receptors in AWC(OFF) neuron via the nsy-1/ASK1 pmk-1/p38 MAP kinase signaling cascade. Required to localize nsy-1 to postsynaptic regions of AWC neuron, suggesting that it may act by assembling a signaling complex that regulate odorant receptor expression. Also plays a central role in resistance to infection to a broad range of bacterial and fungi pathogens, possibly by activating pmk-1, independently of the NF-kappa-B pathway. Required for expression of antimicrobial peptides nlp-29 and nlp-31. Its role in immune response and neuron specification may be mediated by the same nsy-1/ASK1 pmk-1/p38 MAP kinase cascade signaling pathway. Involved in the response to anoxic conditions probably by activating the p38 pathway composed of nsy-1/sek-1/pmk-1. Involved in regulation of the serotonergic response of ADF neurons to pathogenic food. In addition, plays a role in the up-regulation of gcs-1 upon arsenite treatment, most likely through activation of pmk-1, to confer protection against toxicity induced by heavy metals. Functionally, regulates expression of antimicrobial peptide nlp-29 in response to fungal infection or physical injury. This Caenorhabditis elegans protein is NAD(+) hydrolase tir-1.